Consider the following 96-residue polypeptide: Co-chaperonin GroES (96 aa).

It belongs to the GroES chaperonin family. In terms of assembly, heptamer of 7 subunits arranged in a ring. Interacts with the chaperonin GroEL.

The protein resides in the cytoplasm. Functionally, together with the chaperonin GroEL, plays an essential role in assisting protein folding. The GroEL-GroES system forms a nano-cage that allows encapsulation of the non-native substrate proteins and provides a physical environment optimized to promote and accelerate protein folding. GroES binds to the apical surface of the GroEL ring, thereby capping the opening of the GroEL channel. The protein is Co-chaperonin GroES of Acinetobacter baumannii (strain AB307-0294).